The following is a 367-amino-acid chain: Alanine racemase (367 aa).

Lys35 serves as the catalytic Proton acceptor; specific for D-alanine. At Lys35 the chain carries N6-(pyridoxal phosphate)lysine. A substrate-binding site is contributed by Arg130. The active-site Proton acceptor; specific for L-alanine is Tyr259. Met307 contributes to the substrate binding site.

This sequence belongs to the alanine racemase family. Pyridoxal 5'-phosphate is required as a cofactor.

The enzyme catalyses L-alanine = D-alanine. It participates in amino-acid biosynthesis; D-alanine biosynthesis; D-alanine from L-alanine: step 1/1. Functionally, catalyzes the interconversion of L-alanine and D-alanine. May also act on other amino acids. The protein is Alanine racemase (alr) of Delftia acidovorans (strain DSM 14801 / SPH-1).